The following is a 141-amino-acid chain: Nucleoside diphosphate kinase (141 aa).

Lysine 11, phenylalanine 59, arginine 87, threonine 93, arginine 104, and asparagine 114 together coordinate ATP. Histidine 117 acts as the Pros-phosphohistidine intermediate in catalysis.

Belongs to the NDK family. As to quaternary structure, homotetramer. Mg(2+) serves as cofactor.

Its subcellular location is the cytoplasm. It carries out the reaction a 2'-deoxyribonucleoside 5'-diphosphate + ATP = a 2'-deoxyribonucleoside 5'-triphosphate + ADP. It catalyses the reaction a ribonucleoside 5'-diphosphate + ATP = a ribonucleoside 5'-triphosphate + ADP. Its function is as follows. Major role in the synthesis of nucleoside triphosphates other than ATP. The ATP gamma phosphate is transferred to the NDP beta phosphate via a ping-pong mechanism, using a phosphorylated active-site intermediate. In Polaromonas sp. (strain JS666 / ATCC BAA-500), this protein is Nucleoside diphosphate kinase.